A 786-amino-acid chain; its full sequence is Endonuclease MutS2 (786 aa).

332–339 is a binding site for ATP; it reads GPNTGGKT. The region spanning 711–786 is the Smr domain; it reads IDLRGMDSEE…GTGVTVVILK (76 aa).

The protein belongs to the DNA mismatch repair MutS family. MutS2 subfamily. As to quaternary structure, homodimer. Binds to stalled ribosomes, contacting rRNA.

Endonuclease that is involved in the suppression of homologous recombination and thus may have a key role in the control of bacterial genetic diversity. Its function is as follows. Acts as a ribosome collision sensor, splitting the ribosome into its 2 subunits. Detects stalled/collided 70S ribosomes which it binds and splits by an ATP-hydrolysis driven conformational change. Acts upstream of the ribosome quality control system (RQC), a ribosome-associated complex that mediates the extraction of incompletely synthesized nascent chains from stalled ribosomes and their subsequent degradation. Probably generates substrates for RQC. The protein is Endonuclease MutS2 of Clostridium perfringens (strain SM101 / Type A).